The following is a 905-amino-acid chain: Methionine--tRNA ligase, cytoplasmic (905 aa).

Positions 1–75 (MKLFVGEGNP…YFYLSSGHDM (75 aa)) constitute a GST N-terminal domain. One can recognise a GST C-terminal domain in the interval 72–199 (GHDMCDLSNQ…DKGSSVFKPF (128 aa)). Residues 271–281 (PYVNNVPHLGN) carry the 'HIGH' region motif. Residues 591–595 (KFSKS) carry the 'KMSKS' region motif. ATP is bound at residue Lys594. Disordered stretches follow at residues 813-874 (RFGG…VIDP) and 886-905 (LALA…KKKK). The span at 841 to 874 (GPERVKELMQELEKQGNHVRELKGKKAEKSVIDP) shows a compositional bias: basic and acidic residues. The WHEP-TRS domain maps to 844 to 900 (RVKELMQELEKQGNHVRELKGKKAEKSVIDPEVQKLLALKKELALAEGKSPDPPTQK).

It belongs to the class-I aminoacyl-tRNA synthetase family. Monomer. Part of a multisubunit complex that groups tRNA ligases for Arg (RARS1), Asp (DARS1), Gln (QARS1), Ile (IARS1), Leu (LARS1), Lys (KARS1), Met (MARS1) the bifunctional ligase for Glu and Pro (EPRS1) and the auxiliary subunits AIMP1/p43, AIMP2/p38 and EEF1E1/p18.

Its subcellular location is the cytoplasm. It is found in the cytosol. It localises to the nucleus. The protein localises to the nucleolus. It catalyses the reaction tRNA(Met) + L-methionine + ATP = L-methionyl-tRNA(Met) + AMP + diphosphate. Its function is as follows. Catalyzes the specific attachment of an amino acid to its cognate tRNA in a 2 step reaction: the amino acid (AA) is first activated by ATP to form AA-AMP and then transferred to the acceptor end of the tRNA. Plays a role in the synthesis of ribosomal RNA in the nucleolus. This chain is Methionine--tRNA ligase, cytoplasmic (mars1), found in Xenopus laevis (African clawed frog).